Here is a 294-residue protein sequence, read N- to C-terminus: Ethylene-inducing xylanase 3 (294 aa).

Positions 1 to 19 (MVCFSSLFVAASAIAGVFA) are cleaved as a signal peptide. The GH11 domain occupies 31–226 (QSTPSSQGTH…SSGSARINVA (196 aa)). Residue Glu-122 is the Nucleophile of the active site. The Proton donor role is filled by Glu-213. Positions 259–294 (SCAARWGQCGGSGWNGATCCSAGTCQAQNQWYSQCL) constitute a CBM1 domain.

The protein belongs to the glycosyl hydrolase 11 (cellulase G) family.

The catalysed reaction is Endohydrolysis of (1-&gt;4)-beta-D-xylosidic linkages in xylans.. The protein operates within glycan degradation; xylan degradation. Functionally, endo-1,4-beta-xylanase involved in the hydrolysis of xylan, a major structural heterogeneous polysaccharide found in plant biomass representing the second most abundant polysaccharide in the biosphere, after cellulose. Exhibits immunity-inducing activity in Nicotiana benthamiana. Can induce strong oxidative burst, activate the expression of defense-related genes, and increase resistance against oomycete and fungal pathogens in N.benthamiana. The protein is Ethylene-inducing xylanase 3 of Verticillium dahliae (strain VdLs.17 / ATCC MYA-4575 / FGSC 10137) (Verticillium wilt).